The following is a 457-amino-acid chain: Endo-1,3(4)-beta-glucanase ARB_04519 (457 aa).

A signal peptide spans 1-18 (MRTTGLLLLGALAELGSA). In terms of domain architecture, GH16 spans 19-319 (TYILEDDYQP…YMKVYQQGTA (301 aa)). Residue E130 is the Nucleophile of the active site. The active-site Proton donor is E135. The N-linked (GlcNAc...) asparagine glycan is linked to N200. The tract at residues 318-397 (TAPTKPSQAP…DSCPPPTQPA (80 aa)) is disordered. The span at 333–352 (TPALPTMKSTSTVSSMVSAT) shows a compositional bias: low complexity. A compositionally biased stretch (polar residues) spans 353 to 362 (QPAPTASNPT). Over residues 368–378 (PSSSSSNNGPQ) the composition is skewed to low complexity.

Belongs to the glycosyl hydrolase 16 family.

It is found in the secreted. It carries out the reaction Endohydrolysis of (1-&gt;3)- or (1-&gt;4)-linkages in beta-D-glucans when the glucose residue whose reducing group is involved in the linkage to be hydrolyzed is itself substituted at C-3.. In terms of biological role, mixed-linked glucanase involved in the degradation of complex natural cellulosic substrates. Active on laminarin. lichenan, soluble carboxymethyl cellulose but not on pustulan. This Arthroderma benhamiae (strain ATCC MYA-4681 / CBS 112371) (Trichophyton mentagrophytes) protein is Endo-1,3(4)-beta-glucanase ARB_04519.